The sequence spans 266 residues: Oxidoreductase aflX (266 aa).

Belongs to the avfA family.

Its pathway is mycotoxin biosynthesis; aflatoxin biosynthesis. Its function is as follows. Oxidoreductase; part of the gene cluster that mediates the biosynthesis of aflatoxins, a group of polyketide-derived furanocoumarins, and part of the most toxic and carcinogenic compounds among the known mycotoxins. The four major aflatoxins produced by A.parasiticus are aflatoxin B1 (AFB1), aflatoxin B2 (AFB2), aflatoxin G1 (AFG1) and aflatoxin G2 (AFG2). Within the aflatoxin pathway, the oxidoreductase aflX seems to be involved in the conversion of versicolorin A (VERA) to demethylsterigmatocystin (DMST), through probable epoxide ring-opening step following versicolorin A oxidation required for the formation of the xanthone ring. The biosynthesis of aflatoxins begins with the norsolorinic acid synthase aflC that combines a hexanoyl starter unit produced by the fatty acid synthase aflA/aflB and 7 malonyl-CoA extender units to synthesize the precursor NOR. The second step is the conversion of NOR to averantin and requires the norsolorinic acid ketoreductase aflD, which catalyzes the dehydration of norsolorinic acid to form (1'S)-averantin. The norsolorinic acid reductases aflE and aflF may also play a role in the conversion of NOR to AVN. The cytochrome P450 monooxygenase aflG then catalyzes the hydroxylation of AVN to 5'hydroxyaverantin (HAVN). The next step is performed by the 5'-hydroxyaverantin dehydrogenase aflH that transforms HAVN to 5'-oxoaverantin (OAVN) which is further converted to averufin (AVF) by aflK that plays a dual role in the pathway, as a 5'-oxoaverantin cyclase that mediates conversion of 5'-oxoaverantin, as well as a versicolorin B synthase in a later step in the pathway. The averufin oxidase aflI catalyzes the conversion of AVF to versiconal hemiacetal acetate (VHA). VHA is then the substrate for the versiconal hemiacetal acetate esterase aflJ to yield versiconal (VAL). Versicolorin B synthase aflK then converts VAL to versicolorin B (VERB) by closing the bisfuran ring of aflatoxin which is required for DNA-binding, thus giving to aflatoxin its activity as a mutagen. Then, the activity of the versicolorin B desaturase aflL leads to versicolorin A (VERA). A branch point starts from VERB since it can also be converted to dihydrodemethylsterigmatocystin (DMDHST), probably also by aflL, VERA being a precursor for aflatoxins B1 and G1, and DMDHST for aflatoxins B2 and G2. Next, the versicolorin reductase aflM and the cytochrome P450 monooxygenase aflN are involved in conversion of VERA to demethylsterigmatocystin (DMST). AflX and aflY seem also involved in this step, through probable aflX-mediated epoxide ring-opening step following versicolorin A oxidation and aflY-mediated Baeyer-Villiger oxidation required for the formation of the xanthone ring. The methyltransferase aflO then leads to the modification of DMST to sterigmatocystin (ST), and of DMDHST to dihydrosterigmatocystin (DHST). Both ST and DHST are then substrates of the O-methyltransferase aflP to yield O-methylsterigmatocystin (OMST) and dihydro-O-methylsterigmatocystin (DHOMST), respectively. Finally OMST is converted to aflatoxins B1 and G1, and DHOMST to aflatoxins B2 and G2, via the action of several enzymes including O-methylsterigmatocystin oxidoreductase aflQ, the cytochrome P450 monooxygenase aflU, but also the NADH-dependent flavin oxidoreductase nadA which is specifically required for the synthesis of AFG1. The polypeptide is Oxidoreductase aflX (Aspergillus parasiticus (strain ATCC 56775 / NRRL 5862 / SRRC 143 / SU-1)).